A 333-amino-acid chain; its full sequence is DnaJ homolog subfamily C member 25 homolog (333 aa).

Residues 8–28 (LVLLALLPTMALGLLEGLYCG) traverse the membrane as a helical segment. The J domain maps to 31–99 (NCYDVLGVTR…ESRTDYDYML (69 aa)). Residues 123–143 (VRVVIVVVLTIVSVIQYYSGW) form a helical membrane-spanning segment. Positions 158–208 (KYRNQALEIARDEIQEKIQKKGKNRMSKNDQRDELERIIRRVIEEKMDVKG) form a coiled coil. A helical transmembrane segment spans residues 218-238 (VLWVQLIICPYTILSFIVWHA).

The protein belongs to the DNAJC25 family.

It is found in the membrane. The polypeptide is DnaJ homolog subfamily C member 25 homolog (Drosophila melanogaster (Fruit fly)).